Consider the following 30-residue polypeptide: Brevinin-2Rj (30 aa).

An intrachain disulfide couples Cys24 to Cys30.

Expressed by the skin glands.

The protein localises to the secreted. Its function is as follows. Antimicrobial peptide. This is Brevinin-2Rj from Pelophylax ridibundus (Marsh frog).